We begin with the raw amino-acid sequence, 213 residues long: MFNQSYLNVYFICGTSNVPSHRTIHEVLEAALKAGITLFQFREKGESALKGNDKLVLAKELQHLCHQYNVPFIVNDDVSLAKEINADGIHVGQDDAKVKEIAQYFTDKIIGLSISDLGEYAKSDLTHVDYIGVGPIYPTPSKHDAHTPVGPEMIATFKEMNPQLPIVAIGGINTSNVAPIVEAGANGISVISAISKSENIEKTVNRFKDFFNN.

Residues 40-44 and Asn-75 each bind 4-amino-2-methyl-5-(diphosphooxymethyl)pyrimidine; that span reads QFREK. Residues Asp-76 and Asp-95 each coordinate Mg(2+). A 4-amino-2-methyl-5-(diphosphooxymethyl)pyrimidine-binding site is contributed by Ser-113. 139–141 contributes to the 2-[(2R,5Z)-2-carboxy-4-methylthiazol-5(2H)-ylidene]ethyl phosphate binding site; it reads TPS. Lys-142 is a 4-amino-2-methyl-5-(diphosphooxymethyl)pyrimidine binding site. 2-[(2R,5Z)-2-carboxy-4-methylthiazol-5(2H)-ylidene]ethyl phosphate contacts are provided by residues Gly-171 and 191-192; that span reads IS.

The protein belongs to the thiamine-phosphate synthase family. Requires Mg(2+) as cofactor.

It catalyses the reaction 2-[(2R,5Z)-2-carboxy-4-methylthiazol-5(2H)-ylidene]ethyl phosphate + 4-amino-2-methyl-5-(diphosphooxymethyl)pyrimidine + 2 H(+) = thiamine phosphate + CO2 + diphosphate. The enzyme catalyses 2-(2-carboxy-4-methylthiazol-5-yl)ethyl phosphate + 4-amino-2-methyl-5-(diphosphooxymethyl)pyrimidine + 2 H(+) = thiamine phosphate + CO2 + diphosphate. The catalysed reaction is 4-methyl-5-(2-phosphooxyethyl)-thiazole + 4-amino-2-methyl-5-(diphosphooxymethyl)pyrimidine + H(+) = thiamine phosphate + diphosphate. The protein operates within cofactor biosynthesis; thiamine diphosphate biosynthesis; thiamine phosphate from 4-amino-2-methyl-5-diphosphomethylpyrimidine and 4-methyl-5-(2-phosphoethyl)-thiazole: step 1/1. Condenses 4-methyl-5-(beta-hydroxyethyl)thiazole monophosphate (THZ-P) and 2-methyl-4-amino-5-hydroxymethyl pyrimidine pyrophosphate (HMP-PP) to form thiamine monophosphate (TMP). The sequence is that of Thiamine-phosphate synthase from Staphylococcus aureus (strain bovine RF122 / ET3-1).